The primary structure comprises 135 residues: Germinal center-associated signaling and motility-like protein (135 aa).

The tract at residues 1–68 (MGNYLLRKLS…ENGSGSEEVC (68 aa)) is disordered. The span at 22-48 (GNPDEERKRQEMTTFERKLQDQDKKSQ) shows a compositional bias: basic and acidic residues. Residues 26 to 50 (EERKRQEMTTFERKLQDQDKKSQEV) adopt a coiled-coil conformation. The segment covering 51–66 (SSTSNQENENGSGSEE) has biased composition (low complexity).

In Homo sapiens (Human), this protein is Germinal center-associated signaling and motility-like protein (GCSAML).